A 175-amino-acid chain; its full sequence is D-glycero-beta-D-manno-heptose-1,7-bisphosphate 7-phosphatase (175 aa).

Asp7 serves as the catalytic Nucleophile. Positions 7 and 9 each coordinate Mg(2+). Substrate contacts are provided by residues 7 to 9 (DRD), 15 to 19 (DSDAY), and 50 to 53 (TNQS). The active-site Proton donor is Asp9. Zn(2+) is bound by residues Cys89, His91, Cys97, and Cys99. 100–101 (RK) is a binding site for substrate. Mg(2+) is bound at residue Asp126.

The protein belongs to the gmhB family. As to quaternary structure, monomer. The cofactor is Mg(2+). Zn(2+) is required as a cofactor.

The protein resides in the cytoplasm. The catalysed reaction is D-glycero-beta-D-manno-heptose 1,7-bisphosphate + H2O = D-glycero-beta-D-manno-heptose 1-phosphate + phosphate. It functions in the pathway nucleotide-sugar biosynthesis; ADP-L-glycero-beta-D-manno-heptose biosynthesis; ADP-L-glycero-beta-D-manno-heptose from D-glycero-beta-D-manno-heptose 7-phosphate: step 2/4. It participates in bacterial outer membrane biogenesis; LPS core biosynthesis. Converts the D-glycero-beta-D-manno-heptose 1,7-bisphosphate (beta-HBP) intermediate into D-glycero-beta-D-manno-heptose 1-phosphate by removing the phosphate group at the C-7 position. This chain is D-glycero-beta-D-manno-heptose-1,7-bisphosphate 7-phosphatase, found in Pseudomonas putida (strain ATCC 47054 / DSM 6125 / CFBP 8728 / NCIMB 11950 / KT2440).